We begin with the raw amino-acid sequence, 317 residues long: Nicotianamine synthase (317 aa).

This sequence belongs to the nicotianamine synthase (NAS)-like family. In terms of assembly, homomultimer. In terms of tissue distribution, leaves and roots.

It catalyses the reaction 3 S-adenosyl-L-methionine = nicotianamine + 3 S-methyl-5'-thioadenosine + 3 H(+). In terms of biological role, synthesizes nicotianamine, a polyamine that serves as a sensor for the physiological iron status within the plant, and/or might be involved in the transport of iron. The chain is Nicotianamine synthase (CHLN) from Solanum lycopersicum (Tomato).